Here is a 369-residue protein sequence, read N- to C-terminus: UDP-N-acetylenolpyruvoylglucosamine reductase (369 aa).

One can recognise an FAD-binding PCMH-type domain in the interval Val29–Ser202. The active site involves Arg176. Ser257 (proton donor) is an active-site residue. The active site involves Glu361.

The protein belongs to the MurB family. It depends on FAD as a cofactor.

Its subcellular location is the cytoplasm. The catalysed reaction is UDP-N-acetyl-alpha-D-muramate + NADP(+) = UDP-N-acetyl-3-O-(1-carboxyvinyl)-alpha-D-glucosamine + NADPH + H(+). The protein operates within cell wall biogenesis; peptidoglycan biosynthesis. Its function is as follows. Cell wall formation. This chain is UDP-N-acetylenolpyruvoylglucosamine reductase, found in Mycobacterium tuberculosis (strain ATCC 25177 / H37Ra).